The following is an 878-amino-acid chain: Interleukin-3 receptor class 2 subunit beta (878 aa).

Residues 1–22 (MDQQMALTWGLCYMALVALCWG) form the signal peptide. The Extracellular segment spans residues 23 to 440 (HEVTEEEETV…SNEYTWTTDW (418 aa)). A disulfide bridge links C39 with C49. The N-linked (GlcNAc...) asparagine glycan is linked to N62. C78 and C95 are disulfide-bonded. The 106-residue stretch at 139-244 (PPKDIHISPS…PEVHWDSQPG (106 aa)) folds into the Fibronectin type-III 1 domain. Positions 223–244 (GSSLSGRPSRWSPEVHWDSQPG) are disordered. 2 disulfides stabilise this stretch: C254–C264 and C293–C310. Positions 343–438 (QMEPPILNQT…EWSNEYTWTT (96 aa)) constitute a Fibronectin type-III 2 domain. Residue N350 is glycosylated (N-linked (GlcNAc...) asparagine). The short motif at 427-431 (WSEWS) is the WSXWS motif element. Residues 441 to 462 (VMPTLWIVLILVFLIFTLLLAL) traverse the membrane as a helical segment. The Cytoplasmic portion of the chain corresponds to 463–878 (HFGRVYGYRT…AIQFFKSLKY (416 aa)). The Box 1 motif signature appears at 476–484 (WKEKIPNPS). 2 disordered regions span residues 539-620 (LTIE…GGSL) and 660-709 (SSLE…MASD). Over residues 554 to 570 (PDTTPAASSESTEQLPN) the composition is skewed to polar residues. Positions 671–689 (EPKENPPVELSVEKQEARD) are enriched in basic and acidic residues. S752 and S754 each carry phosphoserine. Y765 bears the Phosphotyrosine mark. Disordered stretches follow at residues 771–810 (SVSQ…PHPE) and 829–849 (PGSL…ETED).

This sequence belongs to the type I cytokine receptor family. Type 4 subfamily. Heterodimer of an alpha and a beta subunit.

The protein resides in the membrane. Functionally, in mouse, there are two classes of high-affinity IL3 receptors. One contains this IL3-specific beta subunit and the other contains the beta subunit also shared by high-affinity IL5 and GM-CSF receptors. The polypeptide is Interleukin-3 receptor class 2 subunit beta (Csf2rb2) (Mus musculus (Mouse)).